The sequence spans 252 residues: Chitooligosaccharide deacetylase (252 aa).

Positions 61 and 125 each coordinate Mg(2+).

It belongs to the YdjC deacetylase family. ChbG subfamily. In terms of assembly, homodimer. Mg(2+) is required as a cofactor.

It localises to the cytoplasm. It catalyses the reaction N,N'-diacetylchitobiose + H2O = N-acetyl-beta-D-glucosaminyl-(1-&gt;4)-D-glucosamine + acetate. The enzyme catalyses diacetylchitobiose-6'-phosphate + H2O = N'-monoacetylchitobiose-6'-phosphate + acetate. Its pathway is glycan degradation; chitin degradation. Functionally, involved in the degradation of chitin. ChbG is essential for growth on the acetylated chitooligosaccharides chitobiose and chitotriose but is dispensable for growth on cellobiose and chitosan dimer, the deacetylated form of chitobiose. Deacetylation of chitobiose-6-P and chitotriose-6-P is necessary for both the activation of the chb promoter by the regulatory protein ChbR and the hydrolysis of phosphorylated beta-glucosides by the phospho-beta-glucosidase ChbF. Catalyzes the removal of only one acetyl group from chitobiose-6-P to yield monoacetylchitobiose-6-P, the inducer of ChbR and the substrate of ChbF. This Klebsiella pneumoniae (strain 342) protein is Chitooligosaccharide deacetylase.